A 171-amino-acid polypeptide reads, in one-letter code: Ribosome maturation factor RimM (171 aa).

Residues 97 to 169 (DGEFYYHEII…RVDVSIMEGL (73 aa)) form the PRC barrel domain.

It belongs to the RimM family. Binds ribosomal protein uS19.

Its subcellular location is the cytoplasm. Its function is as follows. An accessory protein needed during the final step in the assembly of 30S ribosomal subunit, possibly for assembly of the head region. Essential for efficient processing of 16S rRNA. May be needed both before and after RbfA during the maturation of 16S rRNA. It has affinity for free ribosomal 30S subunits but not for 70S ribosomes. The polypeptide is Ribosome maturation factor RimM (Lactococcus lactis subsp. lactis (strain IL1403) (Streptococcus lactis)).